We begin with the raw amino-acid sequence, 422 residues long: SPbeta prophage-derived glycosyltransferase SunS (422 aa).

The protein belongs to the glycosyltransferase 2 family.

Its function is as follows. Transfers a hexose moiety onto 'Cys-41' of bacteriocin sublancin-168 (SunA). Accepts UDP-glucose (UDP-Glc), UDP-N-acetylglucosamine (UDP-GlcNAc), UDP-galactose (UDP-Gal), UDP-xylose (UDP-Xyl) and GDP-mannose as substrate. The protein is SPbeta prophage-derived glycosyltransferase SunS (sunS) of Bacillus subtilis (strain 168).